A 297-amino-acid chain; its full sequence is UDP-N-acetylenolpyruvoylglucosamine reductase (297 aa).

The region spanning 26-191 is the FAD-binding PCMH-type domain; sequence KSGGTADWLF…VAARFRGHPG (166 aa). Residue Arg-171 is part of the active site. Ser-220 functions as the Proton donor in the catalytic mechanism. Residue Glu-290 is part of the active site.

The protein belongs to the MurB family. FAD serves as cofactor.

It localises to the cytoplasm. The enzyme catalyses UDP-N-acetyl-alpha-D-muramate + NADP(+) = UDP-N-acetyl-3-O-(1-carboxyvinyl)-alpha-D-glucosamine + NADPH + H(+). It functions in the pathway cell wall biogenesis; peptidoglycan biosynthesis. Its function is as follows. Cell wall formation. This Novosphingobium aromaticivorans (strain ATCC 700278 / DSM 12444 / CCUG 56034 / CIP 105152 / NBRC 16084 / F199) protein is UDP-N-acetylenolpyruvoylglucosamine reductase.